A 248-amino-acid chain; its full sequence is Probable transcriptional regulatory protein MCA1220 (248 aa).

This sequence belongs to the TACO1 family.

Its subcellular location is the cytoplasm. The protein is Probable transcriptional regulatory protein MCA1220 of Methylococcus capsulatus (strain ATCC 33009 / NCIMB 11132 / Bath).